The chain runs to 396 residues: Purine ribonucleoside efflux pump NepI (396 aa).

Residues 1–21 (MSEFIAENRGADAITRPNWSA) are Cytoplasmic-facing. A helical membrane pass occupies residues 22 to 42 (VFSVAFCVACLIIVEFLPVSL). Over 43-54 (LTPMAQDLGISE) the chain is Periplasmic. The chain crosses the membrane as a helical span at residues 55–75 (GVAGQSVTVTAFVAMFASLFI). The Cytoplasmic segment spans residues 76 to 85 (TQTIQATDRR). The chain crosses the membrane as a helical span at residues 86-106 (YVVILFAVLLTLSCLLVSFAN). Serine 107 is a topological domain (periplasmic). The helical transmembrane segment at 108–128 (FSLLLIGRACLGLALGGFWAM) threads the bilayer. Residues 129-147 (SASLTMRLVPPRTVPKALS) are Cytoplasmic-facing. Residues 148–168 (VIFGAVSIALVIAAPLGCFLG) form a helical membrane-spanning segment. The Periplasmic portion of the chain corresponds to 169–175 (ELIGWRN). The chain crosses the membrane as a helical span at residues 176–196 (VFNAAAAMGVLCIFWIIKSLP). At 197 to 215 (SLPGEPSHQKQNTFRLLQR) the chain is on the cytoplasmic side. Residues 216 to 236 (PGVMAGMIAIFMSFAGQFAFF) form a helical membrane-spanning segment. Residues 237 to 255 (TYIRPVYMTLAGFGVDGLT) lie on the Periplasmic side of the membrane. Residues 256–276 (LVLLSFGIASFVGTSLSSFIL) traverse the membrane as a helical segment. Topologically, residues 277–281 (KRSVK) are cytoplasmic. Residues 282-302 (LALAGAPFVLALSALVLTLWG) traverse the membrane as a helical segment. The Periplasmic portion of the chain corresponds to 303 to 305 (SDK). The helical transmembrane segment at 306-326 (IVATGVAIIWGLTFALIPVGW) threads the bilayer. The Cytoplasmic segment spans residues 327–343 (STWITRSLADQAEKAGS). A helical membrane pass occupies residues 344–364 (IQVAVIQLANTCGAAIGGYAL). Over 365–366 (DN) the chain is Periplasmic. A helical membrane pass occupies residues 367–387 (IGLTSPLMLSGTLMLLTALLV). The Cytoplasmic segment spans residues 388–396 (TAKVKMKKS).

Belongs to the major facilitator superfamily. DHA1 family. NepI (TC 2.A.1.2.26) subfamily.

It is found in the cell inner membrane. The enzyme catalyses inosine(in) + H(+)(out) = inosine(out) + H(+)(in). It catalyses the reaction guanosine(in) + H(+)(out) = guanosine(out) + H(+)(in). Its function is as follows. Involved in the efflux of purine ribonucleosides, such as inosine and guanosine. The chain is Purine ribonucleoside efflux pump NepI from Escherichia coli O157:H7.